The sequence spans 212 residues: Uridine kinase (212 aa).

13–20 (GGSGSGKT) is a binding site for ATP.

It belongs to the uridine kinase family.

It localises to the cytoplasm. It catalyses the reaction uridine + ATP = UMP + ADP + H(+). The catalysed reaction is cytidine + ATP = CMP + ADP + H(+). The protein operates within pyrimidine metabolism; CTP biosynthesis via salvage pathway; CTP from cytidine: step 1/3. It functions in the pathway pyrimidine metabolism; UMP biosynthesis via salvage pathway; UMP from uridine: step 1/1. The polypeptide is Uridine kinase (Bacillus cytotoxicus (strain DSM 22905 / CIP 110041 / 391-98 / NVH 391-98)).